The chain runs to 1463 residues: Secretory phospholipase A2 receptor (1463 aa).

Positions 1 to 20 (MLLSPSLLLLLLLGAPRGCA) are cleaved as a signal peptide. Residues 21 to 1397 (EGVAAALTPE…ALPEKGPSHS (1377 aa)) are Extracellular-facing. The 124-residue stretch at 38 to 161 (KGIFVIQSES…GSGGGDICEY (124 aa)) folds into the Ricin B-type lectin domain. 14 disulfides stabilise this stretch: Cys51–Cys64, Cys89–Cys106, Cys178–Cys204, Cys192–Cys219, Cys260–Cys354, Cys330–Cys346, Cys406–Cys501, Cys478–Cys493, Cys617–Cys634, Cys699–Cys796, Cys774–Cys788, Cys840–Cys937, Cys914–Cys929, and Cys1067–Cys1087. A glycan (N-linked (GlcNAc...) asparagine) is linked at Asn93. The region spanning 173 to 221 (THGMPCMFPFQYNHQWHHECTREGREDDLLWCATTSRYERDEKWGFCPD) is the Fibronectin type-II domain. C-type lectin domains are found at residues 238-355 (NSHI…YICK), 385-502 (YNRN…YICK), 522-643 (HGGF…MSLC), 673-797 (GLAS…WICK), 819-938 (YQDA…SICK), 965-1096 (FNYK…GFVC), 1121-1232 (YGNR…GAIC), and 1257-1378 (FKSN…FICK). N-linked (GlcNAc...) asparagine glycosylation is present at Asn454. Asn1123 carries an N-linked (GlcNAc...) asparagine glycan. Intrachain disulfides connect Cys1209-Cys1223, Cys1280-Cys1377, and Cys1354-Cys1369. A helical membrane pass occupies residues 1398–1418 (IIPLAVVLTLIVIVAICTLSF). The Cytoplasmic portion of the chain corresponds to 1419–1463 (CIYKHNGGFFRRLAGFRNPYYPATNFSTVYLEENILISDLEKSDQ). An Endocytosis signal motif is present at residues 1436-1442 (NPYYPAT).

As to quaternary structure, interacts with sPLA2-IB/PLA2G1B; this interaction mediates intracellular signaling as well as clearance of extracellular sPLA2-IB/PLA2G1B via endocytotic pathway. Interacts with sPLA2-X/PLA2G10; this interaction mediates sPLA2-X/PLA2G10 clearance and inactivation. Post-translationally, the secretory phospholipase A2 receptor form may be produced by the action of metalloproteinases. It contains all extracellular domains and only lacks transmembrane and cytosolic regions. It is however unclear whether this form is produced by proteolytic cleavage as suggested by some experiments, or by alternative splicing, as in the case of isoform 2 that shares all characteristics of secretory phospholipase A2 receptor form. As to expression, expressed in podocytes (at protein level). Present in lung macrophage (at protein level). Highly expressed in kidney. Also expressed in pancreas, amnion, choriodecidua and placenta. Isoform 2 is expressed at much lower level.

It is found in the cell membrane. Its subcellular location is the secreted. Receptor for secretory phospholipase A2 (sPLA2). Acts as a receptor for phospholipase sPLA2-IB/PLA2G1B but not sPLA2-IIA/PLA2G2A. Also able to bind to snake PA2-like toxins. Although its precise function remains unclear, binding of sPLA2 to its receptor participates in both positive and negative regulation of sPLA2 functions as well as clearance of sPLA2. Binding of sPLA2-IB/PLA2G1B induces various effects depending on the cell type, such as activation of the mitogen-activated protein kinase (MAPK) cascade to induce cell proliferation, the production of lipid mediators, selective release of arachidonic acid in bone marrow-derived mast cells. In neutrophils, binding of sPLA2-IB/PLA2G1B can activate p38 MAPK to stimulate elastase release and cell adhesion. May be involved in responses in pro-inflammatory cytokine productions during endotoxic shock. Also has endocytic properties and rapidly internalizes sPLA2 ligands, which is particularly important for the clearance of extracellular sPLA2s to protect their potent enzymatic activities. The soluble secretory phospholipase A2 receptor form is circulating and acts as a negative regulator of sPLA2 functions by blocking the biological functions of sPLA2-IB/PLA2G1B. In podocytes, binding of sPLA2-IB/PLA2G1B can regulate podocyte survival and glomerular homeostasis. This chain is Secretory phospholipase A2 receptor (PLA2R1), found in Homo sapiens (Human).